Consider the following 219-residue polypeptide: Flagellar biosynthetic protein FliZ (219 aa).

Positions 1–26 (MKKSQYFIVFICFFVLFSVHPIAAAA) are cleaved as a signal peptide. Residues 41–61 (KDEKTADQSEQKKEKTTKTAD) are compositionally biased toward basic and acidic residues. Positions 41–62 (KDEKTADQSEQKKEKTTKTADE) are disordered. A helical transmembrane segment spans residues 71 to 96 (VSAFDFVKMIFALLFVIVLIYGLVKL). A compositionally biased stretch (basic and acidic residues) spans 200–212 (LEELKQNRSEGKK). Residues 200 to 219 (LEELKQNRSEGKKKGPRHHE) form a disordered region.

The protein localises to the cell membrane. Functionally, may be a structural component of the flagellum that anchors the rod to the membrane. The polypeptide is Flagellar biosynthetic protein FliZ (fliZ) (Bacillus subtilis (strain 168)).